The following is a 507-amino-acid chain: UDP-N-acetylhexosamine pyrophosphorylase-like protein 1 (507 aa).

Positions 111 to 114 match the Substrate binding motif; sequence LAGG. Residues 111 to 114, Lys-125, Gln-199, and Gly-225 contribute to the UTP site; that span reads LAGG. Residue Asn-226 coordinates substrate. Asp-256 provides a ligand contact to UTP. The Substrate binding motif lies at 306-307; the sequence is EY. A UTP-binding site is contributed by Lys-380. A substrate-binding site is contributed by Lys-410.

Belongs to the UDPGP type 1 family.

This Mus musculus (Mouse) protein is UDP-N-acetylhexosamine pyrophosphorylase-like protein 1 (Uap1l1).